The chain runs to 379 residues: Chaperone protein DnaJ (379 aa).

The region spanning 5-70 (DYYEVLGVSR…QKRAAYDQYG (66 aa)) is the J domain. The CR-type zinc-finger motif lies at 134–212 (GVTKEIRIPT…CHGHGRVEKS (79 aa)). 8 residues coordinate Zn(2+): C147, C150, C164, C167, C186, C189, C200, and C203. CXXCXGXG motif repeat units lie at residues 147–154 (CDVCHGSG), 164–171 (CPTCHGAG), 186–193 (CPHCHGRG), and 200–207 (CNKCHGHG).

It belongs to the DnaJ family. In terms of assembly, homodimer. The cofactor is Zn(2+).

The protein localises to the cytoplasm. Its function is as follows. Participates actively in the response to hyperosmotic and heat shock by preventing the aggregation of stress-denatured proteins and by disaggregating proteins, also in an autonomous, DnaK-independent fashion. Unfolded proteins bind initially to DnaJ; upon interaction with the DnaJ-bound protein, DnaK hydrolyzes its bound ATP, resulting in the formation of a stable complex. GrpE releases ADP from DnaK; ATP binding to DnaK triggers the release of the substrate protein, thus completing the reaction cycle. Several rounds of ATP-dependent interactions between DnaJ, DnaK and GrpE are required for fully efficient folding. Also involved, together with DnaK and GrpE, in the DNA replication of plasmids through activation of initiation proteins. In Yersinia pestis bv. Antiqua (strain Antiqua), this protein is Chaperone protein DnaJ.